We begin with the raw amino-acid sequence, 32 residues long: MSDIN-like toxin proprotein 1 (32 aa).

The propeptide occupies 1–10; that stretch reads MSDINVTRLP. A cross-link (cyclopeptide (Gly-Pro)) is located at residues 11 to 18; it reads GFVPILFP. Residues 19–32 constitute a propeptide that is removed on maturation; that stretch reads CVGDDVNTALTRGE.

This sequence belongs to the MSDIN fungal toxin family. In terms of processing, processed by the macrocyclase-peptidase enzyme POPB to yield a toxic cyclic octapeptide. POPB first removes 10 residues from the N-terminus. Conformational trapping of the remaining peptide forces the enzyme to release this intermediate rather than proceed to macrocyclization. The enzyme rebinds the remaining peptide in a different conformation and catalyzes macrocyclization of the N-terminal 8 residues.

Its function is as follows. Probable toxin that belongs to the MSDIN-like toxin family responsible for a large number of food poisoning cases and deaths. The chain is MSDIN-like toxin proprotein 1 from Amanita bisporigera (Destroying angel).